The chain runs to 800 residues: Phenylalanine--tRNA ligase beta subunit (800 aa).

Positions 39-152 (AAGLSKIVVG…EDAVPGEEVF (114 aa)) constitute a tRNA-binding domain. The B5 domain maps to 405-480 (TSDVEVSSTL…RIYGYDRLPT (76 aa)). Mg(2+) contacts are provided by Asp-458, Asp-464, Glu-467, and Glu-468. The 94-residue stretch at 707–800 (TKFPAVSRDV…LEEKVNAEVR (94 aa)) folds into the FDX-ACB domain.

Belongs to the phenylalanyl-tRNA synthetase beta subunit family. Type 1 subfamily. In terms of assembly, tetramer of two alpha and two beta subunits. Mg(2+) is required as a cofactor.

It localises to the cytoplasm. The enzyme catalyses tRNA(Phe) + L-phenylalanine + ATP = L-phenylalanyl-tRNA(Phe) + AMP + diphosphate + H(+). The protein is Phenylalanine--tRNA ligase beta subunit of Streptococcus pneumoniae (strain ATCC BAA-255 / R6).